A 406-amino-acid chain; its full sequence is S-adenosylmethionine synthase (406 aa).

H16 contributes to the ATP binding site. D18 contacts Mg(2+). E44 is a binding site for K(+). Residues E57 and Q100 each contribute to the L-methionine site. The flexible loop stretch occupies residues 100 to 110 (QSVDIAQGVDR). ATP contacts are provided by residues 165–167 (DAK), D241, 247–248 (RK), A264, and K268. D241 serves as a coordination point for L-methionine. Residue K272 coordinates L-methionine.

This sequence belongs to the AdoMet synthase family. Homotetramer; dimer of dimers. Mg(2+) serves as cofactor. It depends on K(+) as a cofactor.

The protein resides in the cytoplasm. The catalysed reaction is L-methionine + ATP + H2O = S-adenosyl-L-methionine + phosphate + diphosphate. It participates in amino-acid biosynthesis; S-adenosyl-L-methionine biosynthesis; S-adenosyl-L-methionine from L-methionine: step 1/1. Its function is as follows. Catalyzes the formation of S-adenosylmethionine (AdoMet) from methionine and ATP. The overall synthetic reaction is composed of two sequential steps, AdoMet formation and the subsequent tripolyphosphate hydrolysis which occurs prior to release of AdoMet from the enzyme. The polypeptide is S-adenosylmethionine synthase (Chromohalobacter salexigens (strain ATCC BAA-138 / DSM 3043 / CIP 106854 / NCIMB 13768 / 1H11)).